We begin with the raw amino-acid sequence, 540 residues long: 2-isopropylmalate synthase (540 aa).

Residues 8-269 enclose the Pyruvate carboxyltransferase domain; sequence VLIFDTTLRD…YFNPFFGREP (262 aa). Mn(2+) is bound by residues Asp17, His208, His210, and Asn244. Residues 408-540 form a regulatory domain region; that stretch reads QLRLVQVSCG…AVLADLRSGI (133 aa).

This sequence belongs to the alpha-IPM synthase/homocitrate synthase family. LeuA type 1 subfamily. In terms of assembly, homodimer. Requires Mn(2+) as cofactor.

It is found in the cytoplasm. The catalysed reaction is 3-methyl-2-oxobutanoate + acetyl-CoA + H2O = (2S)-2-isopropylmalate + CoA + H(+). The protein operates within amino-acid biosynthesis; L-leucine biosynthesis; L-leucine from 3-methyl-2-oxobutanoate: step 1/4. Functionally, catalyzes the condensation of the acetyl group of acetyl-CoA with 3-methyl-2-oxobutanoate (2-ketoisovalerate) to form 3-carboxy-3-hydroxy-4-methylpentanoate (2-isopropylmalate). In Prochlorococcus marinus (strain MIT 9313), this protein is 2-isopropylmalate synthase.